Reading from the N-terminus, the 62-residue chain is Synergistic-type venom protein S2C4 (62 aa).

Cystine bridges form between Cys-3-Cys-24, Cys-17-Cys-42, and Cys-46-Cys-57.

It belongs to the three-finger toxin family. Short-chain subfamily. Aminergic toxin sub-subfamily. Homodimer; disulfide-linked. Expressed by the venom gland.

It is found in the secreted. Its function is as follows. This protein shows a synergetic toxic effect in that it enhances the toxicity of other toxins. The polypeptide is Synergistic-type venom protein S2C4 (Dendroaspis jamesoni kaimosae (Eastern Jameson's mamba)).